We begin with the raw amino-acid sequence, 315 residues long: Ribosomal protein L11 methyltransferase (315 aa).

Threonine 164, glycine 185, aspartate 207, and asparagine 249 together coordinate S-adenosyl-L-methionine.

The protein belongs to the methyltransferase superfamily. PrmA family.

It is found in the cytoplasm. The catalysed reaction is L-lysyl-[protein] + 3 S-adenosyl-L-methionine = N(6),N(6),N(6)-trimethyl-L-lysyl-[protein] + 3 S-adenosyl-L-homocysteine + 3 H(+). In terms of biological role, methylates ribosomal protein L11. The protein is Ribosomal protein L11 methyltransferase of Lactobacillus johnsonii (strain CNCM I-12250 / La1 / NCC 533).